A 553-amino-acid chain; its full sequence is ATP synthase subunit alpha (553 aa).

173-180 (GDRQTGKT) lines the ATP pocket. The disordered stretch occupies residues 527-553 (EALDPSAVEREEIAVHHRKPSDETAGH). A compositionally biased stretch (basic and acidic residues) spans 533–553 (AVEREEIAVHHRKPSDETAGH).

It belongs to the ATPase alpha/beta chains family. In terms of assembly, F-type ATPases have 2 components, CF(1) - the catalytic core - and CF(0) - the membrane proton channel. CF(1) has five subunits: alpha(3), beta(3), gamma(1), delta(1), epsilon(1). CF(0) has three main subunits: a(1), b(2) and c(9-12). The alpha and beta chains form an alternating ring which encloses part of the gamma chain. CF(1) is attached to CF(0) by a central stalk formed by the gamma and epsilon chains, while a peripheral stalk is formed by the delta and b chains.

Its subcellular location is the cell membrane. It catalyses the reaction ATP + H2O + 4 H(+)(in) = ADP + phosphate + 5 H(+)(out). Functionally, produces ATP from ADP in the presence of a proton gradient across the membrane. The alpha chain is a regulatory subunit. The polypeptide is ATP synthase subunit alpha (Parafrankia sp. (strain EAN1pec)).